We begin with the raw amino-acid sequence, 199 residues long: Nuclear protein UL4 (199 aa).

It belongs to the alphaherpesvirinae HHV-1 UL4 family.

Its subcellular location is the host nucleus. The sequence is that of Nuclear protein UL4 from Homo sapiens (Human).